We begin with the raw amino-acid sequence, 285 residues long: MSSDLAAELGFDPALKKKKKTKKVIPDDFDAAVNGKENGSGDDLFAGLKKKKKKSKSVSADAEAEKEPTDDIAEALGELSLKKKKKKTKDSSVDAFEKELAKAGLDNVDAESKEGTPSANSSIQQEVGLPYSELLSRFFNILRTNNPELAGDRSGPKFRIPPPVCLRDGKKTIFSNIQDIAEKLHRSPEHLIQYLFAELGTSGSVDGQKRLVIKGKFQSKQMENVLRRYILEYVTCKTCKSINTELKREQSNRLFFMVCKSCGSTRSVSSIKTGFQATVGKRRRM.

The tract at residues 30–69 (DAAVNGKENGSGDDLFAGLKKKKKKSKSVSADAEAEKEPT) is disordered. Ser40 bears the Phosphoserine mark. Thr69 bears the Phosphothreonine mark. Ser80, Ser92, and Ser112 each carry phosphoserine. Thr116 is modified (phosphothreonine). Ser118 is modified (phosphoserine). The C4-type zinc finger occupies 236–262 (CKTCKSINTELKREQSNRLFFMVCKSC).

Belongs to the eIF-2-beta/eIF-5 family. In terms of assembly, eukaryotic translation initiation factor 2 eIF2 is a heterotrimeric complex composed of an alpha, a beta and a gamma subunit. The factors eIF-1, eIF-2, eIF-3, TIF5/eIF-5 and methionyl-tRNAi form a multifactor complex (MFC) that may bind to the 40S ribosome. Interacts with GCD6. Interacts with GCD1. Interacts with TIF5/eIF-5. Interacts with CDC123.

It is found in the cytoplasm. Its subcellular location is the cytosol. In terms of biological role, component of the eIF2 complex that functions in the early steps of protein synthesis by forming a ternary complex with GTP and initiator tRNA. This complex binds to a 40S ribosomal subunit, followed by mRNA binding to form a 43S pre-initiation complex (43S PIC). Junction of the 60S ribosomal subunit to form the 80S initiation complex is preceded by hydrolysis of the GTP bound to eIF2 and release of an eIF2-GDP binary complex. In order for eIF2 to recycle and catalyze another round of initiation, the GDP bound to eIF2 must exchange with GTP by way of a reaction catalyzed by eIF2B. This chain is Eukaryotic translation initiation factor 2 subunit beta (SUI3), found in Saccharomyces cerevisiae (strain ATCC 204508 / S288c) (Baker's yeast).